We begin with the raw amino-acid sequence, 412 residues long: MADSPREGKVARPPDFTQLIDLASEFVGGKILFATDDFFAPAENLLKRDNPSFKEHEYTEFGKWMDGWQTRRKRIPGHDWCVVQLGIQGVIRGFDVDTSYFTGDHAPRVSIQAANFEEDKQPEIPQREVRTGAAATPEEFEAISELKSDDWSCLVPMTELTPGNPASSHNYFPVTSQQRWSHIRLNIFPDGGIARLRVYGTGQKDWTAGDPKEPLDLVTVAYGGACVGFSNAHFGHPNNLIGVGTATSMADGWETARRLDRPPILENDENGILLVPGCEWAVFRLAHPGVITQIEIDTKYFKGNSPESCKVDGCILTTQEEEDMVRQKWDLPGHKWKPLLPVTKLKPDEMHVLDSLTPELQDVITHAKFTITPDGGVSRLRLKGFPSSICLLRPREKPMMRFSVKAGFRANL.

Belongs to the allantoicase family.

In terms of biological role, the function of this enzyme is unclear as allantoicase activity is not known to exist in mammals. The chain is Probable inactive allantoicase (ALLC) from Bos taurus (Bovine).